Reading from the N-terminus, the 442-residue chain is MGLAMEHGGSYARAGGSSRGCWYYLRYFFLFVSLIQFLIILGLVLFMVYGNVHVSTESNLQATERRAEGLYSQLLGLTASQSNLTKELNFTTRAKDAIMQMWLNARRDLDRINASFRQCQGDRVIYTNNQRYMAAIILSEKQCRDQFKDMNKSCDALLFMLNQKVKTLEVEIAKEKTICTKDKESVLLNKRVAEEQLVECVKTRELQHQERQLAKEQLQKVQALCLPLDKDKFEMDLRNLWRDSIIPRSLDNLGYNLYHPLGSELASIRRACDHMPSLMSSKVEELARSLRADIERVARENSDLQRQKLEAQQGLRASQEAKQKVEKEAQAREAKLQAECSRQTQLALEEKAVLRKERDNLAKELEEKKREAEQLRMELAIRNSALDTCIKTKSQPMMPVSRPMGPVPNPQPIDPASLEEFKRKILESQRPPAGIPVAPSSG.

Topologically, residues 1-27 (MGLAMEHGGSYARAGGSSRGCWYYLRY) are cytoplasmic. Residues 28–48 (FFLFVSLIQFLIILGLVLFMV) form a helical; Signal-anchor for type II membrane protein membrane-spanning segment. Over 49–442 (YGNVHVSTES…AGIPVAPSSG (394 aa)) the chain is Extracellular. Residues 57–77 (ESNLQATERRAEGLYSQLLGL) are a coiled coil. Residues asparagine 83, asparagine 89, asparagine 113, and asparagine 151 are each glycosylated (N-linked (GlcNAc...) asparagine). Coiled-coil stretches lie at residues 202 to 225 (KTRE…QALC) and 280 to 387 (SSKV…SALD). Disordered regions lie at residues 301–328 (NSDL…VEKE) and 394–418 (SQPM…PASL). Residues 319–328 (QEAKQKVEKE) are compositionally biased toward basic and acidic residues.

As to quaternary structure, homodimer. As to expression, expressed in lung, kidney, heart, aorta, placenta, muscle, pituitary gland, adrenals, mammary gland, bladder, lymph node, bone marrow, trachea, digestive tract, liver and tumor-associated endothelium.

It localises to the cell membrane. The protein localises to the membrane. The protein resides in the caveola. It is found in the cytoplasm. Its subcellular location is the perinuclear region. Its function is as follows. Endothelial cell-specific membrane protein involved in the formation of the diaphragms that bridge endothelial fenestrae. It is also required for the formation of stomata of caveolae and transendothelial channels. Functions in microvascular permeability, endothelial fenestrae contributing to the passage of water and solutes and regulating transcellular versus paracellular flow in different organs. Plays a specific role in embryonic development. The protein is Plasmalemma vesicle-associated protein (PLVAP) of Homo sapiens (Human).